The chain runs to 291 residues: Methyl-CpG-binding domain protein 3 (291 aa).

The MBD domain maps to 1-72 (MERKRWECPA…DFRTGKMLMS (72 aa)). The tract at residues 1-80 (MERKRWECPA…MSKMNKSRQR (80 aa)) is required for interaction with MBD2. Serine 56 is modified (phosphoserine). Residues 60–80 (STFDFRTGKMLMSKMNKSRQR) are required for interaction with MBD3L2. Lysine 73 is covalently cross-linked (Glycyl lysine isopeptide (Lys-Gly) (interchain with G-Cter in SUMO2)). Serine 85 is modified (phosphoserine). Residues lysine 90 and lysine 92 each participate in a glycyl lysine isopeptide (Lys-Gly) (interchain with G-Cter in SUMO2) cross-link. At serine 144 the chain carries Phosphoserine. The stretch at 216 to 245 (KAFMVTDEDIRKQEELVQQVRKRLEEALMA) forms a coiled coil. Residues 254 to 267 (LARDGEAPLDKACA) show a composition bias toward basic and acidic residues. Residues 254-291 (LARDGEAPLDKACAEDDDEEDEEEEEEEPDPDPEMEHV) form a disordered region. A compositionally biased stretch (acidic residues) spans 268-291 (EDDDEEDEEEEEEEPDPDPEMEHV).

In terms of assembly, heterodimer (via N-terminus) with MBD2. Component of the MeCP1 histone deacetylase complex. Component of the nucleosome remodeling and deacetylase (NuRD) repressor complex, composed of core proteins MTA1, MTA2, MTA3, RBBP4, RBBP7, HDAC1, HDAC2, MBD2, MBD3, and peripherally associated proteins CDK2AP1, CDK2AP2, GATAD2A, GATAD2B, CHD3, CHD4 and CHD5. The exact stoichiometry of the NuRD complex is unknown, and some subunits such as MBD2 and MBD3, GATAD2A and GATAD2B, and CHD3, CHD4 and CHD5 define mutually exclusive NuRD complexes. Interacts with MBD3L2 (via N-terminus); the interaction is direct. Interacts with BCL6. Interacts with CDK2AP1. Interacts with HDAC1. Interacts with MTA2. Interacts with DNMT1. Interacts with GATAD2A. Interacts with GATAD2B. Does not interact with PWWP2A. Does not interact with PWWP2B.

Its subcellular location is the nucleus. It is found in the chromosome. Functionally, acts as a component of the histone deacetylase NuRD complex which participates in the remodeling of chromatin. Acts as transcriptional repressor and plays a role in gene silencing. Does not bind to methylated DNA by itself. Binds to a lesser degree DNA containing unmethylated CpG dinucleotides. Recruits histone deacetylases and DNA methyltransferases. This chain is Methyl-CpG-binding domain protein 3 (MBD3), found in Homo sapiens (Human).